We begin with the raw amino-acid sequence, 723 residues long: Probable dipeptidyl-peptidase 5 (723 aa).

The signal sequence occupies residues 1–19 (MAALRWLSAVVAVSTTVLA). N-linked (GlcNAc...) asparagine glycans are attached at residues N79, N97, N154, N255, N381, and N451. The active-site Charge relay system is the S561. The N-linked (GlcNAc...) asparagine glycan is linked to N608. Catalysis depends on charge relay system residues D644 and H676.

This sequence belongs to the peptidase S9C family.

Its subcellular location is the secreted. Its function is as follows. Extracellular dipeptidyl-peptidase which removes N-terminal dipeptides sequentially from polypeptides having unsubstituted N-termini. This chain is Probable dipeptidyl-peptidase 5 (dpp5), found in Aspergillus terreus (strain NIH 2624 / FGSC A1156).